The following is a 314-amino-acid chain: tRNA dimethylallyltransferase (314 aa).

9 to 16 provides a ligand contact to ATP; the sequence is GPTAVGKT. Position 11–16 (11–16) interacts with substrate; sequence TAVGKT. Positions 34–37 are interaction with substrate tRNA; that stretch reads DSVQ.

This sequence belongs to the IPP transferase family. Monomer. Requires Mg(2+) as cofactor.

The enzyme catalyses adenosine(37) in tRNA + dimethylallyl diphosphate = N(6)-dimethylallyladenosine(37) in tRNA + diphosphate. Its function is as follows. Catalyzes the transfer of a dimethylallyl group onto the adenine at position 37 in tRNAs that read codons beginning with uridine, leading to the formation of N6-(dimethylallyl)adenosine (i(6)A). The protein is tRNA dimethylallyltransferase of Desulfitobacterium hafniense (strain Y51).